The sequence spans 561 residues: Lengsin (561 aa).

2 disordered regions span residues Met-1–Ala-78 and Ser-91–Asn-112. Over residues Asn-26–Lys-37 the composition is skewed to basic residues. A compositionally biased stretch (polar residues) spans Met-50–Asp-63. Positions Asn-135 to Gly-229 constitute a GS beta-grasp domain. A GS catalytic domain is found at Pro-236–Ile-561.

Belongs to the glutamine synthetase family. In terms of assembly, dodecamer. Interacts with BFSP2 and VIM. As to expression, expressed in lens.

May act as a component of the cytoskeleton or as a chaperone for the reorganization of intermediate filament proteins during terminal differentiation in the lens. Does not seem to have enzymatic activity. The sequence is that of Lengsin (Lgsn) from Rattus norvegicus (Rat).